A 481-amino-acid polypeptide reads, in one-letter code: Tetratricopeptide repeat protein 29 (481 aa).

Positions 1-18 (MASVGPVKTKTVTLKELT) are enriched in low complexity. Positions 1–53 (MASVGPVKTKTVTLKELTPPIPSPEKSACKGAKPDSNHMALVPVKPSQPGSGK) are disordered. TPR repeat units lie at residues 191–224 (CERC…AMES), 231–264 (QEVR…AMAL), 271–310 (VEAN…SQRV), 317–350 (ADSL…ARAA), 357–390 (KRAS…SEKA), and 397–430 (YRAT…ARKL).

In terms of assembly, interacts with TAX-1.

The protein localises to the cytoplasm. The protein resides in the cytoskeleton. It is found in the flagellum axoneme. Its function is as follows. Axonemal protein which is implicated in axonemal and/or peri-axonemal structure assembly and regulates flagellum assembly and beating. This Trypanosoma brucei brucei (strain 927/4 GUTat10.1) protein is Tetratricopeptide repeat protein 29.